Consider the following 400-residue polypeptide: Deoxyguanosinetriphosphate triphosphohydrolase-like protein (400 aa).

Residues 76-204 (RLTHTLEVAQ…VNIADPLAYC (129 aa)) enclose the HD domain.

It belongs to the dGTPase family. Type 2 subfamily.

The polypeptide is Deoxyguanosinetriphosphate triphosphohydrolase-like protein (Syntrophus aciditrophicus (strain SB)).